Here is a 219-residue protein sequence, read N- to C-terminus: MENFRYEIESMLQLVGVDMDVISVDPYSDEKLAEFVSELLLWNKKINLIGKSTEKSIWSRHIAESLILLPYVQGSTVLDMGTGAGLPGLPLQIVSGSNIEMHLVEKDQKKVSFLKHVSANLNLKNIRIYNKQFTEKGFDGAPLVNVVTSRALAEINQLVAWADPCLVNGGSLVLIKGPVCKAELEKFEESDLSDKYENGEIVEYKIDSHDVNIVIIKKK.

Positions 81, 86, and 150 each coordinate S-adenosyl-L-methionine.

This sequence belongs to the methyltransferase superfamily. RNA methyltransferase RsmG family.

It is found in the cytoplasm. The enzyme catalyses guanosine(527) in 16S rRNA + S-adenosyl-L-methionine = N(7)-methylguanosine(527) in 16S rRNA + S-adenosyl-L-homocysteine. Functionally, specifically methylates the N7 position of guanine in position 527 of 16S rRNA. The protein is Ribosomal RNA small subunit methyltransferase G of Magnetococcus marinus (strain ATCC BAA-1437 / JCM 17883 / MC-1).